Consider the following 514-residue polypeptide: Protein farnesyltransferase subunit beta (514 aa).

Residues 1–13 (MRHHTKNLRRRAI) are compositionally biased toward basic residues. The interval 1–56 (MRHHTKNLRRRAIFLRTTPRGNMDSSSSVATSTSSSSNHRLVRSSEGSPSAGGDDI) is disordered. Over residues 25–39 (SSSSVATSTSSSSNH) the composition is skewed to low complexity. 5 PFTB repeats span residues 180 to 221 (AESL…AVVG), 231 to 272 (RRAL…SLLN), 293 to 334 (FTGL…SLLG), 346 to 388 (IERL…PLIE), and 410 to 454 (REGL…SSAQ). (2E,6E)-farnesyl diphosphate contacts are provided by residues 319-322 (HGAY) and 367-370 (RTNK). The Zn(2+) site is built by aspartate 373 and cysteine 375. (2E,6E)-farnesyl diphosphate is bound at residue 376 to 379 (YSHW). Histidine 442 contributes to the Zn(2+) binding site.

It belongs to the protein prenyltransferase subunit beta family. Heterodimer of an alpha and a beta subunit. Interacts with RAS1 and RAS2. The cofactor is Zn(2+). Highly expressed in mycelium, conidium, conidial germination, early formed appressorium and the late infection hypha.

The protein localises to the cytoplasm. The catalysed reaction is L-cysteinyl-[protein] + (2E,6E)-farnesyl diphosphate = S-(2E,6E)-farnesyl-L-cysteinyl-[protein] + diphosphate. Functionally, catalyzes the transfer of a farnesyl moiety from farnesyl diphosphate to a cysteine at the fourth position from the C-terminus of several proteins having the C-terminal sequence Cys-aliphatic-aliphatic-X. The beta subunit is responsible for peptide-binding. The protein is Protein farnesyltransferase subunit beta (RAM1) of Pyricularia oryzae (strain 70-15 / ATCC MYA-4617 / FGSC 8958) (Rice blast fungus).